Reading from the N-terminus, the 135-residue chain is Mu-like prophage FluMu protein gp46 (135 aa).

This sequence to phage Mu protein gp46.

This Haemophilus influenzae (strain ATCC 51907 / DSM 11121 / KW20 / Rd) protein is Mu-like prophage FluMu protein gp46.